Consider the following 1620-residue polypeptide: Myb-like protein X (1620 aa).

Over residues 1-13 the composition is skewed to polar residues; it reads MSTIGNNASSIGN. Disordered stretches follow at residues 1 to 57, 176 to 204, 294 to 318, and 450 to 849; these read MSTI…TTTT, TGSG…SNIG, FFQD…NMTE, and KEEK…TKSA. The span at 28 to 57 shows a compositional bias: low complexity; it reads PPTTTTTTTTTTTTTTTTPTTTTPTTTTTT. The segment covering 177–187 has biased composition (gly residues); the sequence is GSGGIGGGGSG. One can recognise an SWIRM domain in the interval 310 to 421; it reads GSGSNNMTEI…CFVNSGDYMN (112 aa). Residues 450-497 are compositionally biased toward basic and acidic residues; it reads KEEKERLEREEKERLEREEKQEKEEKERLEKEEKERLEREEKQEKEEK. Positions 498–511 are enriched in acidic residues; that stretch reads EEKEEKEENEEKEE. Residues 512–568 show a composition bias toward basic and acidic residues; that stretch reads KEEKEKEEKEEKEKQEKEDDKEKQENENEQEKIEKKENKNDSQNKEIKENHDKKDET. The segment covering 570-598 has biased composition (low complexity); the sequence is DSNNTTTTTTTTTTTSTNTLVAESSSSSS. Residues 606–628 are compositionally biased toward basic and acidic residues; the sequence is KEMKEQPVQENKDKEMMETDTTK. Residues 629 to 645 are compositionally biased toward low complexity; it reads ENNGVETTETTNQTTDS. The segment covering 647–798 has biased composition (basic and acidic residues); the sequence is ETDKEMKDQP…EIKKDKLKEN (152 aa). Positions 799 to 834 are enriched in acidic residues; that stretch reads EEVEGEIEGENDEGEVVEEDEDEEMEIEEDEEDEED. One can recognise an SANT domain in the interval 925 to 977; the sequence is PEEFGWTDIETLLLLEGIEIFRDNWQEISDYIGGSKTPEQCLTHFIRLPIEDE. Positions 1049 to 1506 are disordered; that stretch reads QPSKEELERI…DDDEDVEMET (458 aa). Basic and acidic residues-rich tracts occupy residues 1051–1195, 1219–1255, and 1264–1302; these read SKEE…DKSD, ETVE…KDDN, and HNKE…EKDL. Over residues 1303–1325 the composition is skewed to low complexity; that stretch reads NNLSESQSSNDQSKSNEQMSSDN. Over residues 1338–1350 the composition is skewed to polar residues; it reads TQITSKEQNITTD. Composition is skewed to low complexity over residues 1358-1382 and 1390-1416; these read TPTT…TTNT and NETN…ESNN. Composition is skewed to acidic residues over residues 1467-1481 and 1493-1504; these read EENE…ENDL and VGEEDDDEDVEM.

Its subcellular location is the nucleus. The polypeptide is Myb-like protein X (mybX) (Dictyostelium discoideum (Social amoeba)).